The following is a 141-amino-acid chain: VLSAADKTHVKAFWGKVGGHAAEFGAEALERMFASFPPTKTYFSHMDLSHGSAQVKAHGKKVADALTLAVGHLDDLPGALSTLSDLHAHKLRVDPVNFKFLSHCLLVTLACHLPDDFTPAVHASMDKFMAGVSTVLVSKYR.

One can recognise a Globin domain in the interval 1–141 (VLSAADKTHV…VSTVLVSKYR (141 aa)). At Ser3 the chain carries Phosphoserine. Residue Lys7 is modified to N6-succinyllysine. Residue Thr8 is modified to Phosphothreonine. Lys11 carries the post-translational modification N6-succinyllysine. Residue Lys16 is modified to N6-acetyllysine; alternate. Lys16 carries the post-translational modification N6-succinyllysine; alternate. Phosphoserine is present on Ser35. Lys40 bears the N6-succinyllysine mark. Ser49 carries the post-translational modification Phosphoserine. His58 is an O2 binding site. Heme b is bound at residue His87. Position 102 is a phosphoserine (Ser102). Thr108 carries the post-translational modification Phosphothreonine. Ser124 is subject to Phosphoserine. Thr134 is modified (phosphothreonine). Ser138 carries the phosphoserine modification.

The protein belongs to the globin family. In terms of assembly, heterotetramer of two alpha chains and two beta chains. Red blood cells.

In terms of biological role, involved in oxygen transport from the lung to the various peripheral tissues. Functionally, hemopressin acts as an antagonist peptide of the cannabinoid receptor CNR1. Hemopressin-binding efficiently blocks cannabinoid receptor CNR1 and subsequent signaling. In Dasypus novemcinctus (Nine-banded armadillo), this protein is Hemoglobin subunit alpha (HBA).